The primary structure comprises 1077 residues: Ubiquitin carboxyl-terminal hydrolase 28 (1077 aa).

The tract at residues 60–80 (DERVKEPSQDTVATEPSEVEG) is disordered. S67 carries the phosphoserine modification. A UIM domain is found at 97 to 116 (DNKDDLQAAIALSLLESPKI). A Glycyl lysine isopeptide (Lys-Gly) (interchain with G-Cter in SUMO2) cross-link involves residue K99. The USP domain occupies 162–650 (VGLKNVGNTC…SAYCLMYIND (489 aa)). Residue C171 is the Nucleophile of the active site. A Phosphoserine modification is found at S375. The interval 477-535 (HCSVSDQTSKESTSTESSSQDVESTFSSPEDSLPKSKPLTSSRSSMEMPSQPAPRTVTD) is disordered. A compositionally biased stretch (low complexity) spans 481–501 (SDQTSKESTSTESSSQDVEST). Residues 514 to 524 (PLTSSRSSMEM) are compositionally biased toward polar residues. At S550 the chain carries Phosphoserine. H600 functions as the Proton acceptor in the catalytic mechanism. The segment at 697–728 (EEQSCKIPQMESSTNSSSQDYSTSQEPSVASS) is disordered. Low complexity predominate over residues 707–724 (ESSTNSSSQDYSTSQEPS). The residue at position 714 (S714) is a Phosphoserine. Residue K759 forms a Glycyl lysine isopeptide (Lys-Gly) (interchain with G-Cter in SUMO2) linkage. The residue at position 1048 (T1048) is a Phosphothreonine.

It belongs to the peptidase C19 family. USP28 subfamily. As to quaternary structure, interacts with ZNF304. Interacts with PRKD1. Interacts with TP53BP1. Interacts with isoform 1 of FBXW7; following DNA damage, dissociates from FBXW7 leading to degradation of MYC. Degraded upon nickel ion level or hypoxia exposure. In terms of processing, phosphorylated upon DNA damage at Ser-67 and Ser-714, by ATM or ATR. Phosphorylated by PRKD1.

It is found in the nucleus. Its subcellular location is the nucleoplasm. It catalyses the reaction Thiol-dependent hydrolysis of ester, thioester, amide, peptide and isopeptide bonds formed by the C-terminal Gly of ubiquitin (a 76-residue protein attached to proteins as an intracellular targeting signal).. In terms of biological role, deubiquitinase involved in DNA damage response checkpoint and MYC proto-oncogene stability. Involved in DNA damage induced apoptosis by specifically deubiquitinating proteins of the DNA damage pathway such as CLSPN. Also involved in G2 DNA damage checkpoint, by deubiquitinating CLSPN, and preventing its degradation by the anaphase promoting complex/cyclosome (APC/C). In contrast, it does not deubiquitinate PLK1. Specifically deubiquitinates MYC in the nucleoplasm, leading to prevent MYC degradation by the proteasome: acts by specifically interacting with isoform 1 of FBXW7 (FBW7alpha) in the nucleoplasm and counteracting ubiquitination of MYC by the SCF(FBW7) complex. In contrast, it does not interact with isoform 4 of FBXW7 (FBW7gamma) in the nucleolus, allowing MYC degradation and explaining the selective MYC degradation in the nucleolus. Deubiquitinates ZNF304, hence preventing ZNF304 degradation by the proteasome and leading to the activated KRAS-mediated promoter hypermethylation and transcriptional silencing of tumor suppressor genes (TSGs) in a subset of colorectal cancers (CRC) cells. The chain is Ubiquitin carboxyl-terminal hydrolase 28 (USP28) from Homo sapiens (Human).